The chain runs to 429 residues: Glutamate-1-semialdehyde 2,1-aminomutase (429 aa).

Residue K267 is modified to N6-(pyridoxal phosphate)lysine.

Belongs to the class-III pyridoxal-phosphate-dependent aminotransferase family. HemL subfamily. In terms of assembly, homodimer. Pyridoxal 5'-phosphate is required as a cofactor.

It localises to the cytoplasm. It catalyses the reaction (S)-4-amino-5-oxopentanoate = 5-aminolevulinate. It functions in the pathway porphyrin-containing compound metabolism; protoporphyrin-IX biosynthesis; 5-aminolevulinate from L-glutamyl-tRNA(Glu): step 2/2. The protein is Glutamate-1-semialdehyde 2,1-aminomutase of Stenotrophomonas maltophilia (strain K279a).